Here is a 344-residue protein sequence, read N- to C-terminus: GTP 3',8-cyclase (344 aa).

Residues 19–239 enclose the Radical SAM core domain; sequence PFGRTIDYLR…ANYTLTDLPD (221 aa). Residue R28 participates in GTP binding. Residues C35 and C39 each contribute to the [4Fe-4S] cluster site. S-adenosyl-L-methionine is bound at residue Y41. C42 contacts [4Fe-4S] cluster. R77 contributes to the GTP binding site. G81 provides a ligand contact to S-adenosyl-L-methionine. T111 lines the GTP pocket. Residue S135 coordinates S-adenosyl-L-methionine. Residue K171 coordinates GTP. M205 lines the S-adenosyl-L-methionine pocket. The [4Fe-4S] cluster site is built by C268 and C271. Position 273 to 275 (273 to 275) interacts with GTP; the sequence is RVR. A [4Fe-4S] cluster-binding site is contributed by C285.

Belongs to the radical SAM superfamily. MoaA family. Monomer and homodimer. It depends on [4Fe-4S] cluster as a cofactor.

It catalyses the reaction GTP + AH2 + S-adenosyl-L-methionine = (8S)-3',8-cyclo-7,8-dihydroguanosine 5'-triphosphate + 5'-deoxyadenosine + L-methionine + A + H(+). The protein operates within cofactor biosynthesis; molybdopterin biosynthesis. Catalyzes the cyclization of GTP to (8S)-3',8-cyclo-7,8-dihydroguanosine 5'-triphosphate. This is GTP 3',8-cyclase from Rhodopseudomonas palustris (strain ATCC BAA-98 / CGA009).